A 449-amino-acid chain; its full sequence is Guanine nucleotide-binding protein alpha-2 subunit (449 aa).

The segment at 1–91 is disordered; sequence MGLCASSEKN…TATANTSGSQ (91 aa). Glycine 2 is lipidated: N-myristoyl glycine. Cysteine 4 is lipidated: S-palmitoyl cysteine. Polar residues-rich tracts occupy residues 7–23 and 38–48; these read SEKNGSTPDTQTASAGS and QKTVRTVNTAN. The span at 49-59 shows a compositional bias: low complexity; sequence QQEKQQQRQQQ. The segment covering 72–91 has biased composition (polar residues); the sequence is NGSINNAISPTATANTSGSQ. Residues 122 to 448 enclose the G-alpha domain; it reads KELKVLLLGA…ENTLKDSGVL (327 aa). The segment at 125 to 138 is G1 motif; that stretch reads KVLLLGAGESGKST. GTP-binding residues include glutamate 133, serine 134, glycine 135, lysine 136, serine 137, threonine 138, aspartate 245, leucine 270, threonine 276, glycine 299, asparagine 365, lysine 366, aspartate 368, and alanine 420. Residue serine 137 participates in Mg(2+) binding. Residues 268–276 form a G2 motif region; sequence DILRSRQMT. Threonine 276 is a binding site for Mg(2+). Residues 292 to 301 are G3 motif; sequence MHIYDVGGQR. Positions 361–368 are G4 motif; that stretch reads VLFLNKID. The segment at 418–423 is G5 motif; it reads TQATDT.

The protein belongs to the G-alpha family. G(q) subfamily. In terms of assembly, g proteins are composed of 3 units; alpha, beta and gamma. The alpha chain contains the guanine nucleotide binding site. GPA2 interacts with the kelch repeat beta-mimic proteins GPB1 and GPB2 and with the gamma subunit GPG1. Interacts with the G protein coupled receptor GPR1. Also interacts with regulators of G protein signaling (RGS) protein RGS2. Mg(2+) serves as cofactor. Post-translationally, myristoylation at Gly-2 and palmitoylation at Cys-4 are required for membrane localization and function of the protein.

It localises to the cell membrane. Alternates between an inactive form bound to GDP and an active form bound to GTP. Activated by the G protein coupled receptor (GPCR) GPR1, which serves as a guanine nucleotide-exchange factor (GEF), and inactivated by RGS2, acting as a GTPase-activating protein (GAP) for GPA2. Functionally, alpha subunit of the heterotrimeric guanine nucleotide-binding protein (G protein) involved in glucose-induced cAMP signaling. Binds to its cognate transmembrane receptor GPR1, which senses extracellular carbon sources, and activates cAMP-PKA signaling and governs diploid pseudohyphal differentiation and haploid invasive growth. The G protein beta-mimic proteins GPB1 and GPB2 inhibit GPA2-GPR1 coupling, probably to reduce signaling in the absence of glucose. The polypeptide is Guanine nucleotide-binding protein alpha-2 subunit (GPA2) (Saccharomyces cerevisiae (strain ATCC 204508 / S288c) (Baker's yeast)).